A 250-amino-acid polypeptide reads, in one-letter code: 4-hydroxy-tetrahydrodipicolinate reductase (250 aa).

Residues 10 to 15, 78 to 80, and 105 to 108 contribute to the NAD(+) site; these read GARGRI, GTT, and APNF. The Proton donor/acceptor role is filled by H135. H136 serves as a coordination point for (S)-2,3,4,5-tetrahydrodipicolinate. K139 acts as the Proton donor in catalysis. (S)-2,3,4,5-tetrahydrodipicolinate is bound at residue 145–146; the sequence is GT. The interval 158–177 is disordered; sequence RAEAGSAPQPDATTTALDGA.

Belongs to the DapB family.

The protein localises to the cytoplasm. The catalysed reaction is (S)-2,3,4,5-tetrahydrodipicolinate + NAD(+) + H2O = (2S,4S)-4-hydroxy-2,3,4,5-tetrahydrodipicolinate + NADH + H(+). It catalyses the reaction (S)-2,3,4,5-tetrahydrodipicolinate + NADP(+) + H2O = (2S,4S)-4-hydroxy-2,3,4,5-tetrahydrodipicolinate + NADPH + H(+). It participates in amino-acid biosynthesis; L-lysine biosynthesis via DAP pathway; (S)-tetrahydrodipicolinate from L-aspartate: step 4/4. Functionally, catalyzes the conversion of 4-hydroxy-tetrahydrodipicolinate (HTPA) to tetrahydrodipicolinate. The polypeptide is 4-hydroxy-tetrahydrodipicolinate reductase (Streptomyces griseus subsp. griseus (strain JCM 4626 / CBS 651.72 / NBRC 13350 / KCC S-0626 / ISP 5235)).